The primary structure comprises 311 residues: Probable manganese-dependent inorganic pyrophosphatase (311 aa).

Mn(2+)-binding residues include His-9, Asp-13, Asp-15, Asp-77, His-99, and Asp-151.

This sequence belongs to the PPase class C family. In terms of assembly, homodimer. Requires Mn(2+) as cofactor.

It is found in the cytoplasm. The enzyme catalyses diphosphate + H2O = 2 phosphate + H(+). This is Probable manganese-dependent inorganic pyrophosphatase (ppaC) from Streptococcus gordonii (strain Challis / ATCC 35105 / BCRC 15272 / CH1 / DL1 / V288).